The primary structure comprises 491 residues: Cobyric acid synthase (491 aa).

A GATase cobBQ-type domain is found at 253–429; the sequence is ARRVAVIRLP…WHGALEGDEL (177 aa). Residue Cys334 is the Nucleophile of the active site. Residue His421 is part of the active site.

It belongs to the CobB/CobQ family. CobQ subfamily.

The protein operates within cofactor biosynthesis; adenosylcobalamin biosynthesis. Catalyzes amidations at positions B, D, E, and G on adenosylcobyrinic A,C-diamide. NH(2) groups are provided by glutamine, and one molecule of ATP is hydrogenolyzed for each amidation. In Mycolicibacterium gilvum (strain PYR-GCK) (Mycobacterium gilvum (strain PYR-GCK)), this protein is Cobyric acid synthase.